The following is a 117-amino-acid chain: MTESFTRRERLRLRRDFLLIFKEGKSLQNEYFVVLFRKNGLDYSRLGIVVKRKFGKATRRNKLKRWVREIFRRNKGVIPKGFDIVVIPRKKLSEEFERVDFWTVREKLLNLLKRIEG.

The protein belongs to the RnpA family. Consists of a catalytic RNA component (M1 or rnpB) and a protein subunit.

It carries out the reaction Endonucleolytic cleavage of RNA, removing 5'-extranucleotides from tRNA precursor.. RNaseP catalyzes the removal of the 5'-leader sequence from pre-tRNA to produce the mature 5'-terminus. It can also cleave other RNA substrates such as 4.5S RNA. The protein component plays an auxiliary but essential role in vivo by binding to the 5'-leader sequence and broadening the substrate specificity of the ribozyme. This Thermotoga maritima (strain ATCC 43589 / DSM 3109 / JCM 10099 / NBRC 100826 / MSB8) protein is Ribonuclease P protein component.